We begin with the raw amino-acid sequence, 752 residues long: Catalase-peroxidase (752 aa).

The interval 1-21 (MSNESKCPFHQTAGGGTTNRD) is disordered. Residues 91–245 (WHSAGTYRIG…LAAVQMGLIY (155 aa)) constitute a cross-link (tryptophyl-tyrosyl-methioninium (Trp-Tyr) (with M-271)). His-92 serves as the catalytic Proton acceptor. The disordered stretch occupies residues 204-228 (QAPGQGDLVAEPAKHGEEQNRDLSA). The span at 215–228 (PAKHGEEQNRDLSA) shows a compositional bias: basic and acidic residues. The segment at residues 245 to 271 (YVNPEGPEGNPDPVASGKDIRETFGRM) is a cross-link (tryptophyl-tyrosyl-methioninium (Tyr-Met) (with W-91)). His-286 is a heme binding site. The tract at residues 366–391 (AHQWQPKEGKGAGTVPDAHDPSKRHA) is disordered.

Belongs to the peroxidase family. Peroxidase/catalase subfamily. As to quaternary structure, homodimer or homotetramer. It depends on heme b as a cofactor. In terms of processing, formation of the three residue Trp-Tyr-Met cross-link is important for the catalase, but not the peroxidase activity of the enzyme.

It carries out the reaction H2O2 + AH2 = A + 2 H2O. The enzyme catalyses 2 H2O2 = O2 + 2 H2O. Its function is as follows. Bifunctional enzyme with both catalase and broad-spectrum peroxidase activity. The chain is Catalase-peroxidase from Pseudomonas putida (strain W619).